The sequence spans 577 residues: External alternative NAD(P)H-ubiquinone oxidoreductase B1, mitochondrial (577 aa).

The transit peptide at 1–35 (MRGFTYLSKVLHSHSSYSKLLVLCSVSTGGLLVYA) directs the protein to the mitochondrion. Residue 57–87 (RVVVLGTGWGGTSFLKDVDISSYDVQVVSPR) participates in FAD binding. Residue 221-257 (LHFVIVGGGPTGVEFAAELHDYVYEDLVKIYPSVKDF) participates in NAD(+) binding. In terms of domain architecture, EF-hand spans 378 to 413 (KVMEDISAIFKAADKDDSGTLSIEEFRDVLEDIIIR). Asp-391, Asp-393, Ser-395, Thr-397, and Glu-402 together coordinate Ca(2+). Positions 568–577 (YIFGRDSSRI) match the Microbody targeting signal motif.

The protein belongs to the NADH dehydrogenase family. It depends on FAD as a cofactor.

Its subcellular location is the mitochondrion inner membrane. It localises to the peroxisome. The catalysed reaction is a quinone + NADH + H(+) = a quinol + NAD(+). The enzyme catalyses a ubiquinone + NADH + H(+) = a ubiquinol + NAD(+). Its activity is regulated as follows. Activity is calcium-dependent with a more pronounced effect at higher pH. Its function is as follows. Alternative NADH-ubiquinone oxidoreductase which catalyzes the oxidation of mitochondrial NADH does not translocate protons across the inner mitochondrial membrane. Calcium-dependent NAD(P)H dehydrogenase. Binds calcium ions. This chain is External alternative NAD(P)H-ubiquinone oxidoreductase B1, mitochondrial (NDB1), found in Solanum tuberosum (Potato).